A 199-amino-acid polypeptide reads, in one-letter code: Protein OPI10 homolog (199 aa).

It belongs to the OPI10 family.

The sequence is that of Protein OPI10 homolog from Aedes aegypti (Yellowfever mosquito).